We begin with the raw amino-acid sequence, 254 residues long: uncharacterized protein (254 aa).

NADP(+)-binding residues include isoleucine 18, serine 37, aspartate 63, asparagine 90, tyrosine 159, lysine 163, valine 192, and threonine 194. The active-site Proton donor is the tyrosine 159. The active-site Lowers pKa of active site Tyr is lysine 163.

This sequence belongs to the short-chain dehydrogenases/reductases (SDR) family.

The protein localises to the cytoplasm. The protein resides in the nucleus. This is an uncharacterized protein from Schizosaccharomyces pombe (strain 972 / ATCC 24843) (Fission yeast).